Here is a 326-residue protein sequence, read N- to C-terminus: Pantothenate kinase (326 aa).

104–111 is a binding site for ATP; sequence GSVAVGKS.

It belongs to the prokaryotic pantothenate kinase family.

The protein resides in the cytoplasm. It carries out the reaction (R)-pantothenate + ATP = (R)-4'-phosphopantothenate + ADP + H(+). It functions in the pathway cofactor biosynthesis; coenzyme A biosynthesis; CoA from (R)-pantothenate: step 1/5. In Parvibaculum lavamentivorans (strain DS-1 / DSM 13023 / NCIMB 13966), this protein is Pantothenate kinase.